A 2136-amino-acid polypeptide reads, in one-letter code: U5 small nuclear ribonucleoprotein 200 kDa helicase (2136 aa).

Serine 17 and serine 26 each carry phosphoserine. The tract at residues 39–81 is disordered; sequence EVLSLVGKLEGTRMGDKAQRTKPQMQEERRAKRRKRDEDRHDM. Lysine 46 is covalently cross-linked (Glycyl lysine isopeptide (Lys-Gly) (interchain with G-Cter in SUMO2)). The segment covering 48 to 81 has biased composition (basic and acidic residues); the sequence is EGTRMGDKAQRTKPQMQEERRAKRRKRDEDRHDM. Positions 54–84 form a coiled coil; that stretch reads DKAQRTKPQMQEERRAKRRKRDEDRHDMNKM. A Phosphoserine modification is found at serine 225. Threonine 389 bears the Phosphothreonine mark. Positions 395–2129 are interaction with C9orf78 and WBP4; it reads DLDQGGEALA…YKFSVDVKEA (1735 aa). The Helicase ATP-binding 1 domain maps to 490–673; the sequence is RAALETDENL…FLRVDPAKGL (184 aa). Position 503-510 (503-510) interacts with ATP; it reads APTGAGKT. The DEAH box signature appears at 615–618; the sequence is DEIH. Residues 684–921 form the Helicase C-terminal 1 domain; sequence PLEQTYVGIT…NAKDAVNWLG (238 aa). Tyrosine 709 bears the Phosphotyrosine mark. A Glycyl lysine isopeptide (Lys-Gly) (interchain with G-Cter in SUMO) cross-link involves residue lysine 944. N6-acetyllysine; alternate is present on lysine 971. A Glycyl lysine isopeptide (Lys-Gly) (interchain with G-Cter in SUMO); alternate cross-link involves residue lysine 971. The region spanning 982–1286 is the SEC63 1 domain; sequence TELGRIASHY…SCETQLPVSF (305 aa). Residues lysine 1071 and lysine 1199 each participate in a glycyl lysine isopeptide (Lys-Gly) (interchain with G-Cter in SUMO) cross-link. The tract at residues 1282 to 2136 is interaction with TSSC4; it reads LPVSFRHLIL…KEAETDSDSD (855 aa). Positions 1337–1512 constitute a Helicase ATP-binding 2 domain; it reads NTVYNSDDNV…WLGCSATSTF (176 aa). 1350–1357 provides a ligand contact to ATP; that stretch reads APTGSGKT. Residue threonine 1428 is modified to Phosphothreonine. The DEAH box motif lies at 1454-1457; that stretch reads DEVH. A Helicase C-terminal 2 domain is found at 1545 to 1753; it reads PVYHAITKHS…TIENKQDAVD (209 aa). The residue at position 1765 (threonine 1765) is a Phosphothreonine. The SEC63 2 domain occupies 1812-2124; sequence PLNLGMIAAY…GCDQEYKFSV (313 aa). The residue at position 2002 (serine 2002) is a Phosphoserine. Lysine 2091 participates in a covalent cross-link: Glycyl lysine isopeptide (Lys-Gly) (interchain with G-Cter in SUMO). Phosphothreonine is present on threonine 2131. 2 positions are modified to phosphoserine: serine 2133 and serine 2135.

This sequence belongs to the helicase family. SKI2 subfamily. As to quaternary structure, component of a core complex containing at least PRPF8, SNRNP200, EFTUD2 and SNRNP40. Component of the U5 snRNP and U4/U6-U5 tri-snRNP complexes, building blocks of the spliceosome. Component of the U4/U6-U5 tri-snRNP complex composed of the U4, U6 and U5 snRNAs and at least PRPF3, PRPF4, PRPF6, PRPF8, PRPF31, SNRNP200, TXNL4A, SNRNP40, DDX23, CD2BP2, PPIH, SNU13, EFTUD2, SART1 and USP39. Component of precatalytic, catalytic and postcatalytic spliceosomal complexes. Component of the minor spliceosome, which splices U12-type introns. Interacts with C9orf78; the interaction is direct and mutually exclusive with its interaction with WBP4. Interacts with WBP4; the interaction is mutually exclusive with its interaction with C9orf78. Interacts with PRPF8. Interacts with TSSC4; the interaction is direct, excludes recruitment of C9ORF78 and WBP4 to SNRNP200 and negatively regulates its RNA helicase activity.

The protein resides in the nucleus. The catalysed reaction is ATP + H2O = ADP + phosphate + H(+). Catalyzes the ATP-dependent unwinding of U4/U6 RNA duplices, an essential step in the assembly of a catalytically active spliceosome. Plays a role in pre-mRNA splicing as core component of precatalytic, catalytic and postcatalytic spliceosomal complexes. As a component of the minor spliceosome, involved in the splicing of U12-type introns in pre-mRNAs. Involved in spliceosome assembly, activation and disassembly. Mediates changes in the dynamic network of RNA-RNA interactions in the spliceosome. This chain is U5 small nuclear ribonucleoprotein 200 kDa helicase (Snrnp200), found in Mus musculus (Mouse).